Here is a 199-residue protein sequence, read N- to C-terminus: MKSWKVKEIVIMSVISIVFAVVYLLFTHFGNVLAGMFGPIAYEPIYGIWFIVSVIAAYMIRKPGAALVSEIIAALVECLLGNPSGPMVIVIGIVQGLGAEAVFLATRWKAYSLPVLMLAGMGSSVASFIYDLFVSGYAAYSPGYLLIMLVIRLISGALLAGLLGKAVSDSLAYTGVLNGMALGKELKKKRKRASEHASL.

6 consecutive transmembrane segments (helical) span residues 9–29 (IVIMSVISIVFAVVYLLFTHF), 40–60 (IAYEPIYGIWFIVSVIAAYMI), 63–83 (PGAALVSEIIAALVECLLGNP), 85–105 (GPMVIVIGIVQGLGAEAVFLA), 114–134 (PVLMLAGMGSSVASFIYDLFV), and 143–163 (GYLLIMLVIRLISGALLAGLL).

The complex is composed of two ATP-binding proteins (YkoD), two transmembrane proteins (YkoC and YkoE) and a solute-binding protein (YkoF).

It localises to the cell membrane. Part of the ABC transporter complex YkoCDEF that could transport hydroxymethylpyrimidine (HMP) and/or thiamine. Could also transport other HMP-containing products. Probably responsible for the translocation of the substrate across the membrane. In Bacillus subtilis (strain 168), this protein is Putative HMP/thiamine permease protein YkoE (ykoE).